Consider the following 275-residue polypeptide: Large ribosomal subunit protein uL2 (275 aa).

Positions 224-275 (AMNPVDHPHGGGEAKAGQGNPHPVTPWGVPTKGYKTRKNKRTQQFIVRDRRG) are disordered.

It belongs to the universal ribosomal protein uL2 family. As to quaternary structure, part of the 50S ribosomal subunit. Forms a bridge to the 30S subunit in the 70S ribosome.

Its function is as follows. One of the primary rRNA binding proteins. Required for association of the 30S and 50S subunits to form the 70S ribosome, for tRNA binding and peptide bond formation. It has been suggested to have peptidyltransferase activity; this is somewhat controversial. Makes several contacts with the 16S rRNA in the 70S ribosome. In Xanthomonas oryzae pv. oryzae (strain MAFF 311018), this protein is Large ribosomal subunit protein uL2.